A 341-amino-acid chain; its full sequence is Alpha-1,4-N-acetylglucosaminyltransferase (341 aa).

The Cytoplasmic segment spans residues 1-4 (MLKE). A helical; Signal-anchor for type II membrane protein transmembrane segment spans residues 5 to 25 (IYLSLSLVLVFACGLLYQLTM). Residues 26-341 (RSQCFFACLP…VSKKPGTGSR (316 aa)) lie on the Lumenal side of the membrane. Asn100 carries N-linked (GlcNAc...) asparagine glycosylation. The DXD motif signature appears at 168–170 (DTD).

Belongs to the glycosyltransferase 32 family.

The protein resides in the golgi apparatus membrane. The protein operates within protein modification; protein glycosylation. In terms of biological role, catalyzes the transfer of N-acetylglucosamine (GlcNAc) to core 2 branched O-glycans. Necessary for the synthesis of type III mucin which is specifically produced in the stomach, duodenum, and pancreatic duct. May protect against inflammation-associated gastric adenocarcinoma. The polypeptide is Alpha-1,4-N-acetylglucosaminyltransferase (Mus musculus (Mouse)).